A 447-amino-acid polypeptide reads, in one-letter code: N-succinylarginine dihydrolase (447 aa).

Substrate contacts are provided by residues 19-28 (AGLSFGNEAS), N110, and 137-138 (HR). The active site involves E174. R212 lines the substrate pocket. H248 is a catalytic residue. Positions 250 and 359 each coordinate substrate. C365 functions as the Nucleophile in the catalytic mechanism.

The protein belongs to the succinylarginine dihydrolase family. As to quaternary structure, homodimer.

It catalyses the reaction N(2)-succinyl-L-arginine + 2 H2O + 2 H(+) = N(2)-succinyl-L-ornithine + 2 NH4(+) + CO2. The protein operates within amino-acid degradation; L-arginine degradation via AST pathway; L-glutamate and succinate from L-arginine: step 2/5. Catalyzes the hydrolysis of N(2)-succinylarginine into N(2)-succinylornithine, ammonia and CO(2). The sequence is that of N-succinylarginine dihydrolase from Escherichia coli O6:K15:H31 (strain 536 / UPEC).